Reading from the N-terminus, the 1368-residue chain is DNA-directed RNA polymerase subunit beta (1368 aa).

It belongs to the RNA polymerase beta chain family. As to quaternary structure, the RNAP catalytic core consists of 2 alpha, 1 beta, 1 beta' and 1 omega subunit. When a sigma factor is associated with the core the holoenzyme is formed, which can initiate transcription.

The catalysed reaction is RNA(n) + a ribonucleoside 5'-triphosphate = RNA(n+1) + diphosphate. In terms of biological role, DNA-dependent RNA polymerase catalyzes the transcription of DNA into RNA using the four ribonucleoside triphosphates as substrates. The sequence is that of DNA-directed RNA polymerase subunit beta from Legionella pneumophila (strain Lens).